A 94-amino-acid chain; its full sequence is Small ribosomal subunit protein uS19 (94 aa).

This sequence belongs to the universal ribosomal protein uS19 family.

Its function is as follows. Protein S19 forms a complex with S13 that binds strongly to the 16S ribosomal RNA. The chain is Small ribosomal subunit protein uS19 from Clostridium botulinum (strain Hall / ATCC 3502 / NCTC 13319 / Type A).